Here is a 539-residue protein sequence, read N- to C-terminus: Histone-arginine methyltransferase CARMER (539 aa).

Positions 149–458 (ASQYFQFYGY…QSYDVTIDLH (310 aa)) constitute an SAM-dependent MTase PRMT-type domain. S-adenosyl-L-methionine is bound by residues glutamine 162, arginine 171, glycine 195, glutamate 217, glutamate 246, and threonine 274. Arginine 509 carries the asymmetric dimethylarginine; by autocatalysis modification.

This sequence belongs to the class I-like SAM-binding methyltransferase superfamily. Protein arginine N-methyltransferase family. In terms of assembly, homodimer. The dimethylated protein is the major form.

Its subcellular location is the cytoplasm. It localises to the nucleus. It carries out the reaction L-arginyl-[protein] + 2 S-adenosyl-L-methionine = N(omega),N(omega)-dimethyl-L-arginyl-[protein] + 2 S-adenosyl-L-homocysteine + 2 H(+). Its function is as follows. Methylates (mono- and asymmetric dimethylation) the guanidino nitrogens of arginyl residues in proteins. May methylate histone H3 at 'Arg-17' and activate transcription via chromatin remodeling. The protein is Histone-arginine methyltransferase CARMER (Art4) of Drosophila mojavensis (Fruit fly).